Reading from the N-terminus, the 304-residue chain is 3-diazoavenalumate denitrifying reductase (304 aa).

Belongs to the NAD(P)-dependent epimerase/dehydratase family.

The enzyme catalyses 3-diazoavenalumate + NADPH + H(+) = avenalumate + N2 + NADP(+). The catalysed reaction is 3-diazoavenalumate + NADH + H(+) = avenalumate + N2 + NAD(+). It catalyses the reaction (E)-3-diazocoumarate + NADPH = N2 + (E)-4-coumarate + NADP(+). It carries out the reaction (E)-3-diazocoumarate + NADH = N2 + (E)-4-coumarate + NAD(+). Its function is as follows. Oxidoreductase involved in the biosynthesis of avenalumic acid (AVA). Catalyzes the denitrification of 3-diazoavenalumic acid (3-DAA) to produce AVA. It can also act on 3-diazocoumaric acid (3-DCA). Can use NADPH or NADH as a reductant, with a preference for NADPH. This Streptomyces sp protein is 3-diazoavenalumate denitrifying reductase.